Reading from the N-terminus, the 234-residue chain is Thymidylate kinase (234 aa).

11–18 (GLEGSGKT) contributes to the ATP binding site.

The protein belongs to the thymidylate kinase family.

The enzyme catalyses dTMP + ATP = dTDP + ADP. Functionally, phosphorylation of dTMP to form dTDP in both de novo and salvage pathways of dTTP synthesis. This is Thymidylate kinase from Wigglesworthia glossinidia brevipalpis.